A 560-amino-acid chain; its full sequence is Leucine-rich repeat and IQ domain-containing protein 4 (560 aa).

Positions 1–20 (MSKDIKSVEHSPKIHQRNDP) are disordered. LRR repeat units follow at residues 23–47 (VNDR…IFTF), 48–70 (TELE…IQRL), 72–95 (NIRV…LLSS), 97–116 (ESLD…VVSF), 117–140 (LHAL…IFKN), 141–164 (LHHL…IVNQ), 166–187 (KLRE…LCVL), 188–210 (YTLE…IGHL), 212–233 (GLQK…LCQC), 234–256 (SQLS…FAEL), 258–281 (KMTE…RWTS), 283–301 (HLLY…SFRC), 302–325 (LVNL…ICAL), 326–348 (KNLE…LGSL), 350–371 (KLKI…VLSL), 374–397 (LEKL…IRKL), 398–422 (QSLK…SMPN), 424–443 (EVLD…ICQA), 444–466 (QALK…LDSL), and 468–489 (NLKV…VCAE). An IQ domain is found at 504 to 533 (RNIMATKIQAWWRGTMVQRGFGKFGELLKP). Residues 529–560 (ELLKPQKKGKTSPKDKKGKKDVKGKPGKGKKK) form a disordered region. Residues 533–560 (PQKKGKTSPKDKKGKKDVKGKPGKGKKK) are compositionally biased toward basic residues.

This Homo sapiens (Human) protein is Leucine-rich repeat and IQ domain-containing protein 4 (LRRIQ4).